Here is a 379-residue protein sequence, read N- to C-terminus: Putative 2-hydroxyacid dehydrogenase YGL185C (379 aa).

NAD(+) is bound by residues 207 to 208, 291 to 293, and D317; these read SI and LGR. R293 is a catalytic residue. E322 is a catalytic residue. Residue H341 is the Proton donor of the active site. 341-344 contacts NAD(+); it reads HLGS.

This sequence belongs to the D-isomer specific 2-hydroxyacid dehydrogenase family.

The sequence is that of Putative 2-hydroxyacid dehydrogenase YGL185C from Saccharomyces cerevisiae (strain ATCC 204508 / S288c) (Baker's yeast).